A 116-amino-acid chain; its full sequence is MMKLYSLVIIATLAAAAFAATKQEIAAAALSGMVHDFEQYAKRAEGEEEPKRYIRCSKQLGEKCDLNCECCGASAVCEDYNYICKEKVSDNPVLDWFGQGLNAMGNAISRYYCDAE.

An N-terminal signal peptide occupies residues 1 to 19; the sequence is MMKLYSLVIIATLAAAAFA. Intrachain disulfides connect cysteine 56/cysteine 71, cysteine 64/cysteine 77, cysteine 68/cysteine 113, and cysteine 70/cysteine 84.

This sequence belongs to the neurotoxin 25 family. ICK-8 subfamily. As to expression, expressed by the venom gland.

It localises to the secreted. Ion channel inhibitor. In Trittame loki (Brush-footed trapdoor spider), this protein is Toxin ICK-10.